The primary structure comprises 166 residues: Phosphopantetheine adenylyltransferase (166 aa).

A substrate-binding site is contributed by Thr-9. ATP contacts are provided by residues 9 to 10 and His-17; that span reads TF. Positions 41, 78, and 92 each coordinate substrate. ATP-binding positions include 93–95, Glu-103, and 128–134; these read GLR and HQAIASK.

Belongs to the bacterial CoaD family. As to quaternary structure, homohexamer. Mg(2+) is required as a cofactor.

The protein resides in the cytoplasm. It carries out the reaction (R)-4'-phosphopantetheine + ATP + H(+) = 3'-dephospho-CoA + diphosphate. The protein operates within cofactor biosynthesis; coenzyme A biosynthesis; CoA from (R)-pantothenate: step 4/5. Reversibly transfers an adenylyl group from ATP to 4'-phosphopantetheine, yielding dephospho-CoA (dPCoA) and pyrophosphate. This is Phosphopantetheine adenylyltransferase from Roseobacter denitrificans (strain ATCC 33942 / OCh 114) (Erythrobacter sp. (strain OCh 114)).